We begin with the raw amino-acid sequence, 341 residues long: N-acetyl-gamma-glutamyl-phosphate reductase (341 aa).

C147 is an active-site residue.

The protein belongs to the NAGSA dehydrogenase family. Type 1 subfamily.

The protein resides in the cytoplasm. It carries out the reaction N-acetyl-L-glutamate 5-semialdehyde + phosphate + NADP(+) = N-acetyl-L-glutamyl 5-phosphate + NADPH + H(+). It functions in the pathway amino-acid biosynthesis; L-arginine biosynthesis; N(2)-acetyl-L-ornithine from L-glutamate: step 3/4. Functionally, catalyzes the NADPH-dependent reduction of N-acetyl-5-glutamyl phosphate to yield N-acetyl-L-glutamate 5-semialdehyde. The chain is N-acetyl-gamma-glutamyl-phosphate reductase from Staphylococcus epidermidis (strain ATCC 35984 / DSM 28319 / BCRC 17069 / CCUG 31568 / BM 3577 / RP62A).